The following is a 284-amino-acid chain: Acetyl-coenzyme A carboxylase carboxyl transferase subunit beta (284 aa).

One can recognise a CoA carboxyltransferase N-terminal domain in the interval 25–284 (MWVKCPGCSA…ILGILYRPAA (260 aa)). Zn(2+) contacts are provided by C29, C32, C48, and C51. A C4-type zinc finger spans residues 29 to 51 (CPGCSATLLAKDLDANLNVCPTC).

It belongs to the AccD/PCCB family. In terms of assembly, acetyl-CoA carboxylase is a heterohexamer composed of biotin carboxyl carrier protein (AccB), biotin carboxylase (AccC) and two subunits each of ACCase subunit alpha (AccA) and ACCase subunit beta (AccD). The cofactor is Zn(2+).

The protein localises to the cytoplasm. It catalyses the reaction N(6)-carboxybiotinyl-L-lysyl-[protein] + acetyl-CoA = N(6)-biotinyl-L-lysyl-[protein] + malonyl-CoA. The protein operates within lipid metabolism; malonyl-CoA biosynthesis; malonyl-CoA from acetyl-CoA: step 1/1. Component of the acetyl coenzyme A carboxylase (ACC) complex. Biotin carboxylase (BC) catalyzes the carboxylation of biotin on its carrier protein (BCCP) and then the CO(2) group is transferred by the transcarboxylase to acetyl-CoA to form malonyl-CoA. This Pelobacter propionicus (strain DSM 2379 / NBRC 103807 / OttBd1) protein is Acetyl-coenzyme A carboxylase carboxyl transferase subunit beta.